The primary structure comprises 405 residues: 3-isopropylmalate dehydrogenase (405 aa).

Gly86–Glu104 provides a ligand contact to NAD(+). Substrate is bound by residues Arg111, Arg121, Arg148, and Asp237. Mg(2+)-binding residues include Asp237, Asp262, and Asp266. Position 301 to 312 (Gly301 to Asn312) interacts with NAD(+). Positions Ala352 to Ser371 are disordered.

Belongs to the isocitrate and isopropylmalate dehydrogenases family. In terms of assembly, homodimer. The cofactor is Mg(2+). Mn(2+) serves as cofactor.

The protein resides in the cytoplasm. It catalyses the reaction (2R,3S)-3-isopropylmalate + NAD(+) = 4-methyl-2-oxopentanoate + CO2 + NADH. It participates in amino-acid biosynthesis; L-leucine biosynthesis; L-leucine from 3-methyl-2-oxobutanoate: step 3/4. Catalyzes the oxidation of 3-carboxy-2-hydroxy-4-methylpentanoate (3-isopropylmalate) to 3-carboxy-4-methyl-2-oxopentanoate. The product decarboxylates to 4-methyl-2 oxopentanoate. The polypeptide is 3-isopropylmalate dehydrogenase (LEU2) (Yarrowia lipolytica (strain CLIB 122 / E 150) (Yeast)).